The sequence spans 119 residues: FAD-linked sulfhydryl oxidase (119 aa).

The ERV/ALR sulfhydryl oxidase domain occupies 1-97 (MLHWGPKYWR…ISWSEYKNIY (97 aa)). Cys-44 and Cys-47 are joined by a disulfide.

It belongs to the asfivirus B119L family. Interacts with A151R. FAD serves as cofactor.

The protein resides in the host cytoplasm. It localises to the virion. The catalysed reaction is 2 R'C(R)SH + O2 = R'C(R)S-S(R)CR' + H2O2. Its function is as follows. FAD-dependent sulfhydryl oxidase that catalyzes the formation of disulfide bonds in viral proteins produced in the cell cytoplasm. Involved in virion maturation. The polypeptide is FAD-linked sulfhydryl oxidase (African swine fever virus (isolate Warthog/Namibia/Wart80/1980) (ASFV)).